The chain runs to 643 residues: Thread biopolymer filament subunit alpha (643 aa).

Over residues 1–13 the composition is skewed to polar residues; it reads MSISQTVSKSYTK. A disordered region spans residues 1–34; the sequence is MSISQTVSKSYTKSVSRGGQGVSYSQSSSHKVGG. Residues 1–191 are head; it reads MSISQTVSKS…PDTVQHTRIR (191 aa). Low complexity predominate over residues 14–31; the sequence is SVSRGGQGVSYSQSSSHK. One can recognise an IF rod domain in the interval 192–510; that stretch reads EKQDLQTLNT…KLLDSEETRI (319 aa). Positions 193–227 are coil 1A; the sequence is KQDLQTLNTKFANLVDQVRTLEQHNAILKAQISMI. Residues 228 to 240 form a linker 1 region; that stretch reads TSPSDTPEGPVNT. The tract at residues 241-341 is coil 1B; sequence AVVASTVTAT…YNARVREVQA (101 aa). Residues 342-362 form a linker 12 region; that stretch reads AVTGGPTAAYSIRVDNTHQAI. The coil 2A stretch occupies residues 363 to 381; it reads DLTTSLQEMKTHYEVLATK. Residues 382–389 are linker 2; sequence SREEAFTQ. Residues 390–510 form a coil 2B region; the sequence is VQPRIQEMAV…KLLDSEETRI (121 aa). The tail stretch occupies residues 511–643; that stretch reads SHGGGITITT…SSARSSSRIY (133 aa). The disordered stretch occupies residues 622–643; that stretch reads SRAGYSASRKSYSSARSSSRIY.

Belongs to the intermediate filament family. Coiled-coil heterodimer of an alpha and a gamma subunit. Assemble into 10 nm filaments. Forms a massive, conical, intermediate filament biopolymer of approximately 60 cm.

The protein resides in the secreted. It localises to the extracellular space. Functionally, released extracellularly into seawater and provides physical and biological defense against invasive organism by modulation of the viscoelastic properties of mucus. This Eptatretus stoutii (Pacific hagfish) protein is Thread biopolymer filament subunit alpha.